The primary structure comprises 66 residues: COP9 signalosome complex subunit 6a (66 aa).

Belongs to the peptidase M67A family. CSN6 subfamily. Component of the CSN complex, probably composed of CSN1, CSN2, CSN3, CSN4, CSN5 (CSN5A or CSN5B), CSN6 (CSN6A or CSN6B), CSN7 and CSN8.

The protein localises to the cytoplasm. The protein resides in the nucleus. In terms of biological role, component of the COP9 signalosome complex (CSN), a complex involved in various cellular and developmental processes such as photomorphogenesis and auxin and jasmonate responses. The CSN complex is an essential regulator of the ubiquitin (Ubl) conjugation pathway by mediating the deneddylation of the cullin subunits of SCF-type E3 ligase complexes, leading to decrease the Ubl ligase activity of SCF. It is involved in repression of photomorphogenesis in darkness by regulating the activity of COP1-containing Ubl ligase complexes. The polypeptide is COP9 signalosome complex subunit 6a (CSN6A) (Brassica oleracea (Wild cabbage)).